The sequence spans 444 residues: Tubulin beta-8 chain (444 aa).

Positions Met-1 to Ile-4 match the MREI motif motif. GTP contacts are provided by Gln-11, Glu-69, Ser-138, Gly-142, Thr-143, and Gly-144. Glu-69 serves as a coordination point for Mg(2+). Ser-172 is modified (phosphoserine; by CDK1). GTP-binding residues include Asn-204 and Asn-226. The tract at residues Gln-423–Ala-444 is disordered. Residues Thr-429 to Ala-444 show a composition bias toward acidic residues. 5-glutamyl polyglutamate is present on Glu-436.

The protein belongs to the tubulin family. Dimer of alpha and beta chains. A typical microtubule is a hollow water-filled tube with an outer diameter of 25 nm and an inner diameter of 15 nM. Alpha-beta heterodimers associate head-to-tail to form protofilaments running lengthwise along the microtubule wall with the beta-tubulin subunit facing the microtubule plus end conferring a structural polarity. Microtubules usually have 13 protofilaments but different protofilament numbers can be found in some organisms and specialized cells. Mg(2+) is required as a cofactor. In terms of processing, some glutamate residues at the C-terminus are polyglutamylated, resulting in polyglutamate chains on the gamma-carboxyl group. Polyglutamylation plays a key role in microtubule severing by spastin (SPAST). SPAST preferentially recognizes and acts on microtubules decorated with short polyglutamate tails: severing activity by SPAST increases as the number of glutamates per tubulin rises from one to eight, but decreases beyond this glutamylation threshold. Glutamylation is also involved in cilia motility. Post-translationally, some glutamate residues at the C-terminus are monoglycylated but not polyglycylated due to the absence of functional TTLL10 in human. Monoglycylation is mainly limited to tubulin incorporated into cilia and flagella axonemes, which is required for their stability and maintenance. Flagella glycylation controls sperm motility. Both polyglutamylation and monoglycylation can coexist on the same protein on adjacent residues, and lowering glycylation levels increases polyglutamylation, and reciprocally. Phosphorylated on Ser-172 by CDK1 during the cell cycle, from metaphase to telophase, but not in interphase. This phosphorylation inhibits tubulin incorporation into microtubules. As to expression, expressed at a high level in oocytes, at different stages of development.

The protein resides in the cytoplasm. Its subcellular location is the cytoskeleton. It is found in the spindle. Tubulin is the major constituent of microtubules, a cylinder consisting of laterally associated linear protofilaments composed of alpha- and beta-tubulin heterodimers. Microtubules grow by the addition of GTP-tubulin dimers to the microtubule end, where a stabilizing cap forms. Below the cap, tubulin dimers are in GDP-bound state, owing to GTPase activity of alpha-tubulin. TUBB8 has a key role in meiotic spindle assembly and oocyte maturation. This chain is Tubulin beta-8 chain, found in Homo sapiens (Human).